Consider the following 138-residue polypeptide: Thyrotropin subunit beta (138 aa).

Residues 1-20 form the signal peptide; sequence MTATFLMSMIFGLACGQAMS. 6 disulfide bridges follow: Cys-22–Cys-72, Cys-36–Cys-87, Cys-39–Cys-125, Cys-47–Cys-103, Cys-51–Cys-105, and Cys-108–Cys-115. Asn-43 is a glycosylation site (N-linked (GlcNAc...) asparagine). Positions 133-138 are excised as a propeptide; sequence MVGFSI.

It belongs to the glycoprotein hormones subunit beta family. Heterodimer of a common alpha chain and a unique beta chain which confers biological specificity to thyrotropin, lutropin, follitropin and gonadotropin.

The protein resides in the secreted. Functionally, indispensable for the control of thyroid structure and metabolism. This Bos taurus (Bovine) protein is Thyrotropin subunit beta (TSHB).